A 514-amino-acid polypeptide reads, in one-letter code: 1-pyrroline-5-carboxylate dehydrogenase (514 aa).

Catalysis depends on residues glutamate 286 and cysteine 320.

It belongs to the aldehyde dehydrogenase family. RocA subfamily.

The catalysed reaction is L-glutamate 5-semialdehyde + NAD(+) + H2O = L-glutamate + NADH + 2 H(+). It functions in the pathway amino-acid degradation; L-proline degradation into L-glutamate; L-glutamate from L-proline: step 2/2. The sequence is that of 1-pyrroline-5-carboxylate dehydrogenase from Staphylococcus epidermidis (strain ATCC 12228 / FDA PCI 1200).